The following is a 483-amino-acid chain: UDP-N-acetylmuramoylalanine--D-glutamate ligase (483 aa).

119–125 (GTNGKTT) lines the ATP pocket.

It belongs to the MurCDEF family.

It localises to the cytoplasm. It catalyses the reaction UDP-N-acetyl-alpha-D-muramoyl-L-alanine + D-glutamate + ATP = UDP-N-acetyl-alpha-D-muramoyl-L-alanyl-D-glutamate + ADP + phosphate + H(+). It participates in cell wall biogenesis; peptidoglycan biosynthesis. Cell wall formation. Catalyzes the addition of glutamate to the nucleotide precursor UDP-N-acetylmuramoyl-L-alanine (UMA). The protein is UDP-N-acetylmuramoylalanine--D-glutamate ligase of Mycolicibacterium vanbaalenii (strain DSM 7251 / JCM 13017 / BCRC 16820 / KCTC 9966 / NRRL B-24157 / PYR-1) (Mycobacterium vanbaalenii).